We begin with the raw amino-acid sequence, 54 residues long: MAATDVRPKITLACVECKERNYITKKNRRNNPDRLEMKKHCPRCNAHTAHRETR.

The protein belongs to the bacterial ribosomal protein bL33 family.

This Streptomyces coelicolor (strain ATCC BAA-471 / A3(2) / M145) protein is Large ribosomal subunit protein bL33B (rpmG2).